The following is a 518-amino-acid chain: Integrator complex subunit 14 (518 aa).

One can recognise a VWFA domain in the interval 2-204 (PTVVVMDVSL…KNVQSMFGKL (203 aa)). Mg(2+) is bound by residues serine 10, serine 12, and threonine 86. Lysine 418 carries the N6-acetyllysine modification.

This sequence belongs to the Integrator subunit 14 family. In terms of assembly, component of the Integrator complex, composed of core subunits INTS1, INTS2, INTS3, INTS4, INTS5, INTS6, INTS7, INTS8, INTS9/RC74, INTS10, INTS11/CPSF3L, INTS12, INTS13, INTS14 and INTS15. The core complex associates with protein phosphatase 2A subunits PPP2CA and PPP2R1A, to form the Integrator-PP2A (INTAC) complex. INTS14 is part of the tail subcomplex, composed of INTS10, INTS13, INTS14 and INTS15. As to expression, strongly expressed in numerous cancer cells compared with their non-cancerous counterparts (lung, prostate, colon, stomach and skin).

The protein resides in the nucleus. In terms of biological role, component of the integrator complex, a multiprotein complex that terminates RNA polymerase II (Pol II) transcription in the promoter-proximal region of genes. The integrator complex provides a quality checkpoint during transcription elongation by driving premature transcription termination of transcripts that are unfavorably configured for transcriptional elongation: the complex terminates transcription by (1) catalyzing dephosphorylation of the C-terminal domain (CTD) of Pol II subunit POLR2A/RPB1 and SUPT5H/SPT5, (2) degrading the exiting nascent RNA transcript via endonuclease activity and (3) promoting the release of Pol II from bound DNA. The integrator complex is also involved in terminating the synthesis of non-coding Pol II transcripts, such as enhancer RNAs (eRNAs), small nuclear RNAs (snRNAs), telomerase RNAs and long non-coding RNAs (lncRNAs). Within the integrator complex, INTS14 is part of the integrator tail module that acts as a platform for the recruitment of transcription factors at promoters. The polypeptide is Integrator complex subunit 14 (Homo sapiens (Human)).